We begin with the raw amino-acid sequence, 354 residues long: Erythroferrone (354 aa).

The first 28 residues, 1 to 28, serve as a signal peptide directing secretion; it reads MAPARRPAGARLLLVYAGLLAAAAAGLG. Low complexity-rich tracts occupy residues 26 to 37 and 51 to 62; these read GLGSPEPGAPSR and PRGPGESRAGPA. A disordered region spans residues 26 to 123; sequence GLGSPEPGAP…PGPPGPQGPP (98 aa). The segment covering 69 to 80 has biased composition (basic and acidic residues); that stretch reads TAERAHSVDPRD. Residues 94–107 show a composition bias toward basic residues; it reads NGKKRSRGKAKKLK. Pro-111, Pro-113, Pro-114, Pro-116, Pro-117, and Pro-119 each carry hydroxyproline. Residues 111–123 show a composition bias toward pro residues; the sequence is PGPPGPPGPQGPP. The region spanning 199–354 is the C1q domain; the sequence is APRVEAAFLC…SHFSAVLLGV (156 aa). 3 N-linked (GlcNAc...) asparagine glycosylation sites follow: Asn-243, Asn-295, and Asn-333.

This sequence belongs to the adipolin/erythroferrone family. As to quaternary structure, homodimer; disulfide-linked. Forms trimer, hexamers and higher molecular weight oligomers. May form heteromeric complexes with C1QTNF2 and C1QTNF12 and, to a lesser extent, with C1QTNF5 and C1QTNF10. Interacts with BMP5 and BMP7; the interaction inhibits BMP-induced transcription of HAMP. Interacts with BMP6; the interaction inhibits BMP-induced transcription of HAMP. Interacts with BMP2. Interacts with heterodimers composed of BMP2 and BMP6 in vitro, the interaction inhibits the heterodimer binding to its receptor BMPR1A /ALK3 and thereby suppresses expression of HAMP. N-glycosylated; required for secretion of the mature protein.

Its subcellular location is the secreted. Its function is as follows. Iron-regulatory hormone that acts as an erythroid regulator after hemorrhage: produced by erythroblasts following blood loss and mediates suppression of hepcidin (HAMP) expression in the liver, thereby promoting increased iron absorption and mobilization from stores. Promotes lipid uptake into adipocytes and hepatocytes via transcriptional up-regulation of genes involved in fatty acid uptake. Inhibits apoptosis and inflammatory response in cardiomyocytes via promotion of sphingosine-1-phosphate (S1P) and cAMP-dependent activation of AKT signaling. Inhibits autophagy induced by nutrient deficiency in hepatocytes via promoting the phosphorylation of IRS1, AKT, and MTOR, and thereby subsequent activation of the AKT-MTOR signaling pathway. Negatively regulates the differentiation of osteoblasts, potentially via sequestering BMP2, and thereby inhibits the activation of SMAD signaling. The reduction in BMP2 signaling in osteoblasts also results in an increase in expression of the osteoclastogenesis-promoting factors TNFSF11/RANKL and SOST, thereby indirectly promotes bone resorption. The chain is Erythroferrone from Homo sapiens (Human).